Here is a 249-residue protein sequence, read N- to C-terminus: Exosome complex component Rrp4 (249 aa).

Residues 72–143 form the S1 motif domain; it reads GDTIIGLVED…RTISPVLTVK (72 aa). In terms of domain architecture, KH spans 151–213; sequence PLGTVMDIMP…EALIEAINII (63 aa).

This sequence belongs to the RRP4 family. As to quaternary structure, component of the archaeal exosome complex. Forms a trimer of Rrp4 and/or Csl4 subunits. The trimer associates with a hexameric ring-like arrangement composed of 3 Rrp41-Rrp42 heterodimers.

It localises to the cytoplasm. Its function is as follows. Non-catalytic component of the exosome, which is a complex involved in RNA degradation. Increases the RNA binding and the efficiency of RNA degradation. Confers strong poly(A) specificity to the exosome. The protein is Exosome complex component Rrp4 of Sulfolobus acidocaldarius (strain ATCC 33909 / DSM 639 / JCM 8929 / NBRC 15157 / NCIMB 11770).